We begin with the raw amino-acid sequence, 153 residues long: Transcription antitermination protein NusB (153 aa).

It belongs to the NusB family.

Functionally, involved in transcription antitermination. Required for transcription of ribosomal RNA (rRNA) genes. Binds specifically to the boxA antiterminator sequence of the ribosomal RNA (rrn) operons. This chain is Transcription antitermination protein NusB, found in Fusobacterium nucleatum subsp. nucleatum (strain ATCC 25586 / DSM 15643 / BCRC 10681 / CIP 101130 / JCM 8532 / KCTC 2640 / LMG 13131 / VPI 4355).